Here is a 545-residue protein sequence, read N- to C-terminus: Chaperonin GroEL 2 (545 aa).

ATP is bound by residues Thr29 to Pro32, Asp86 to Thr90, Gly414, and Asp499.

This sequence belongs to the chaperonin (HSP60) family. As to quaternary structure, forms a cylinder of 14 subunits composed of two heptameric rings stacked back-to-back. Interacts with the co-chaperonin GroES.

The protein localises to the cytoplasm. The catalysed reaction is ATP + H2O + a folded polypeptide = ADP + phosphate + an unfolded polypeptide.. In terms of biological role, together with its co-chaperonin GroES, plays an essential role in assisting protein folding. The GroEL-GroES system forms a nano-cage that allows encapsulation of the non-native substrate proteins and provides a physical environment optimized to promote and accelerate protein folding. The protein is Chaperonin GroEL 2 of Chloroflexus aurantiacus (strain ATCC 29366 / DSM 635 / J-10-fl).